Reading from the N-terminus, the 180-residue chain is ADP-ribosylation factor 5 (180 aa).

Glycine 2 is lipidated: N-myristoyl glycine. GTP-binding positions include 24–31 (GLDAAGKT), 67–71 (DVGGQ), and 126–129 (NKQD).

It belongs to the small GTPase superfamily. Arf family.

The protein localises to the golgi apparatus. GTP-binding protein involved in protein trafficking; may modulate vesicle budding and uncoating within the Golgi apparatus. The chain is ADP-ribosylation factor 5 (ARF5) from Gallus gallus (Chicken).